Consider the following 808-residue polypeptide: Transducin beta-like protein 3 (808 aa).

An N-acetylalanine modification is found at Ala2. WD repeat units follow at residues 64 to 105 (EDQE…RLWK), 107 to 146 (IHTA…GTHH), 149 to 190 (GSPG…CLAV), 193 to 232 (AHYS…ATRT), 245 to 284 (LPEE…CVYT), 290 to 329 (GPGQ…LQKQ), 332 to 372 (GYSE…CQIL), 374 to 413 (GHTD…QVMC), 419 to 459 (GHTH…LSKN), 477 to 516 (CHDK…LLGV), 519 to 560 (GHRR…KTFE), 562 to 602 (HDAS…RTLD), and 604 to 642 (HEDK…EQAE). A Phosphoserine modification is found at Ser257. A Glycyl lysine isopeptide (Lys-Gly) (interchain with G-Cter in SUMO2) cross-link involves residue Lys407.

As to quaternary structure, part of the small subunit (SSU) processome, composed of more than 70 proteins and the RNA chaperone small nucleolar RNA (snoRNA) U3.

The protein resides in the nucleus. The protein localises to the nucleolus. Part of the small subunit (SSU) processome, first precursor of the small eukaryotic ribosomal subunit. During the assembly of the SSU processome in the nucleolus, many ribosome biogenesis factors, an RNA chaperone and ribosomal proteins associate with the nascent pre-rRNA and work in concert to generate RNA folding, modifications, rearrangements and cleavage as well as targeted degradation of pre-ribosomal RNA by the RNA exosome. The protein is Transducin beta-like protein 3 of Homo sapiens (Human).